The following is a 177-amino-acid chain: Peptide deformylase (177 aa).

C98 and H140 together coordinate Fe cation. The active site involves E141. H144 lines the Fe cation pocket.

The protein belongs to the polypeptide deformylase family. Fe(2+) serves as cofactor.

It carries out the reaction N-terminal N-formyl-L-methionyl-[peptide] + H2O = N-terminal L-methionyl-[peptide] + formate. Functionally, removes the formyl group from the N-terminal Met of newly synthesized proteins. Requires at least a dipeptide for an efficient rate of reaction. N-terminal L-methionine is a prerequisite for activity but the enzyme has broad specificity at other positions. The protein is Peptide deformylase of Zymomonas mobilis subsp. mobilis (strain ATCC 31821 / ZM4 / CP4).